The primary structure comprises 408 residues: Peptidase T (408 aa).

Zn(2+) is bound at residue His-78. Asp-80 is an active-site residue. Position 140 (Asp-140) interacts with Zn(2+). Glu-173 serves as the catalytic Proton acceptor. Zn(2+)-binding residues include Glu-174, Asp-196, and His-379.

Belongs to the peptidase M20B family. Zn(2+) serves as cofactor.

The protein resides in the cytoplasm. The catalysed reaction is Release of the N-terminal residue from a tripeptide.. Cleaves the N-terminal amino acid of tripeptides. This Escherichia coli (strain K12 / MC4100 / BW2952) protein is Peptidase T.